The following is a 212-amino-acid chain: CRIB domain-containing protein RIC6 (212 aa).

The 14-residue stretch at 34–47 (IGNPTDVKHVAHIG) folds into the CRIB domain. The segment at 51 to 212 (PSANATAPSW…MPQFDNRDDF (162 aa)) is disordered. Residues 53–65 (ANATAPSWMTEFN) are compositionally biased toward polar residues. Residues 106 to 121 (AASEKGSPTKDKSSDK) show a composition bias toward basic and acidic residues. Residues 192–202 (EYMSETGSVRS) are compositionally biased toward polar residues.

In terms of assembly, interacts with ARAC11/ROP1. Expressed in flowers and pollen.

It is found in the cell membrane. Functions as a downstream effector of Rho-related GTP binding proteins of the 'Rho of Plants' (ROPs) family. Participates in the propagation of ROP GTPase signals in specific cellular responses. Is involved in pollen tube growth regulation through its interaction with ARAC11/ROP1. The polypeptide is CRIB domain-containing protein RIC6 (RIC6) (Arabidopsis thaliana (Mouse-ear cress)).